We begin with the raw amino-acid sequence, 305 residues long: tRNA pseudouridine synthase B (305 aa).

The active-site Nucleophile is the D39.

This sequence belongs to the pseudouridine synthase TruB family. Type 1 subfamily.

The catalysed reaction is uridine(55) in tRNA = pseudouridine(55) in tRNA. Its function is as follows. Responsible for synthesis of pseudouridine from uracil-55 in the psi GC loop of transfer RNAs. The protein is tRNA pseudouridine synthase B of Staphylococcus aureus (strain Newman).